The chain runs to 153 residues: Lipoprotein signal peptidase (153 aa).

3 helical membrane-spanning segments follow: residues 7-27 (LIIISIFLIDFFTKKWILNNY), 59-79 (NLIRILIIVISIFILLFIFYM), and 93-113 (SIIIGGSFGNIFDRIFYGSVI). Active-site residues include Asp114 and Asp132. The chain crosses the membrane as a helical span at residues 123–143 (WHFPVFNFADISIFIGFLILI).

It belongs to the peptidase A8 family.

The protein resides in the cell membrane. The catalysed reaction is Release of signal peptides from bacterial membrane prolipoproteins. Hydrolyzes -Xaa-Yaa-Zaa-|-(S,diacylglyceryl)Cys-, in which Xaa is hydrophobic (preferably Leu), and Yaa (Ala or Ser) and Zaa (Gly or Ala) have small, neutral side chains.. Its pathway is protein modification; lipoprotein biosynthesis (signal peptide cleavage). Its function is as follows. This protein specifically catalyzes the removal of signal peptides from prolipoproteins. The polypeptide is Lipoprotein signal peptidase (Wigglesworthia glossinidia brevipalpis).